Reading from the N-terminus, the 216-residue chain is Somatotropin (216 aa).

Positions 1–25 (MAPGSWFSPLLIAVVTLGLPQEAAA) are cleaved as a signal peptide. Histidine 45 contributes to the Zn(2+) binding site. Residues cysteine 78 and cysteine 189 are joined by a disulfide bond. Glutamate 198 provides a ligand contact to Zn(2+). The cysteines at positions 206 and 214 are disulfide-linked.

It belongs to the somatotropin/prolactin family.

The protein localises to the secreted. Its function is as follows. Growth hormone plays an important role in growth control. This is Somatotropin (GH) from Gallus gallus (Chicken).